A 502-amino-acid polypeptide reads, in one-letter code: Lysine--tRNA ligase (502 aa).

Positions 403 and 410 each coordinate Mg(2+).

The protein belongs to the class-II aminoacyl-tRNA synthetase family. In terms of assembly, homodimer. It depends on Mg(2+) as a cofactor.

Its subcellular location is the cytoplasm. The enzyme catalyses tRNA(Lys) + L-lysine + ATP = L-lysyl-tRNA(Lys) + AMP + diphosphate. This Synechococcus sp. (strain CC9902) protein is Lysine--tRNA ligase.